The sequence spans 1075 residues: DNA-directed RNA polymerase subunit beta (1075 aa).

This sequence belongs to the RNA polymerase beta chain family. In plastids the minimal PEP RNA polymerase catalytic core is composed of four subunits: alpha, beta, beta', and beta''. When a (nuclear-encoded) sigma factor is associated with the core the holoenzyme is formed, which can initiate transcription.

It localises to the plastid. It is found in the chloroplast. It carries out the reaction RNA(n) + a ribonucleoside 5'-triphosphate = RNA(n+1) + diphosphate. Its function is as follows. DNA-dependent RNA polymerase catalyzes the transcription of DNA into RNA using the four ribonucleoside triphosphates as substrates. This is DNA-directed RNA polymerase subunit beta from Pinus thunbergii (Japanese black pine).